The primary structure comprises 454 residues: Phosphoglucosamine mutase (454 aa).

Ser-101 functions as the Phosphoserine intermediate in the catalytic mechanism. The Mg(2+) site is built by Ser-101, Asp-243, Asp-245, and Asp-247. Ser-101 is modified (phosphoserine).

This sequence belongs to the phosphohexose mutase family. Mg(2+) is required as a cofactor. In terms of processing, activated by phosphorylation.

It catalyses the reaction alpha-D-glucosamine 1-phosphate = D-glucosamine 6-phosphate. Catalyzes the conversion of glucosamine-6-phosphate to glucosamine-1-phosphate. This chain is Phosphoglucosamine mutase, found in Citrifermentans bemidjiense (strain ATCC BAA-1014 / DSM 16622 / JCM 12645 / Bem) (Geobacter bemidjiensis).